Reading from the N-terminus, the 237-residue chain is uncharacterized protein (237 aa).

In terms of domain architecture, DPCK spans Val-13–Val-218. Gly-18–Ser-25 provides a ligand contact to ATP.

The protein belongs to the CoaE family.

This is an uncharacterized protein from Caenorhabditis elegans.